The primary structure comprises 262 residues: tRNA pseudouridine synthase A (262 aa).

Asp56 (nucleophile) is an active-site residue. Tyr114 serves as a coordination point for substrate.

It belongs to the tRNA pseudouridine synthase TruA family. Homodimer.

The catalysed reaction is uridine(38/39/40) in tRNA = pseudouridine(38/39/40) in tRNA. Functionally, formation of pseudouridine at positions 38, 39 and 40 in the anticodon stem and loop of transfer RNAs. The chain is tRNA pseudouridine synthase A from Lactiplantibacillus plantarum (strain ATCC BAA-793 / NCIMB 8826 / WCFS1) (Lactobacillus plantarum).